The primary structure comprises 499 residues: Endoglucanase (499 aa).

A signal peptide spans 1–29 (MKRSISIFITCLLITLLTMGGMIASPASA). Substrate contacts are provided by residues His65, 69–70 (WY), Tyr96, and His131. Glu169 serves as the catalytic Proton donor. Substrate is bound at residue Tyr231. The active-site Nucleophile is the Glu257. Residues 263 to 264 (AS), Trp291, and 296 to 298 (KQE) contribute to the substrate site. The region spanning 350 to 499 (QENGISVQYR…GKLIWGTEPN (150 aa)) is the CBM3 domain.

This sequence belongs to the glycosyl hydrolase 5 (cellulase A) family.

It catalyses the reaction Endohydrolysis of (1-&gt;4)-beta-D-glucosidic linkages in cellulose, lichenin and cereal beta-D-glucans.. The protein is Endoglucanase (eglS) of Bacillus subtilis (strain 168).